Here is a 483-residue protein sequence, read N- to C-terminus: FAD-linked oxidoreductase easE (483 aa).

Positions 10 to 193 constitute an FAD-binding PCMH-type domain; the sequence is QGRLPFYSAV…TEATVRVFSD (184 aa).

The protein belongs to the oxygen-dependent FAD-linked oxidoreductase family. Requires FAD as cofactor.

It participates in alkaloid biosynthesis; ergot alkaloid biosynthesis. Functionally, FAD-linked oxidoreductase; part of the gene cluster that mediates the biosynthesis of fungal ergot alkaloid. DmaW catalyzes the first step of ergot alkaloid biosynthesis by condensing dimethylallyl diphosphate (DMAP) and tryptophan to form 4-dimethylallyl-L-tryptophan. The second step is catalyzed by the methyltransferase easF that methylates 4-dimethylallyl-L-tryptophan in the presence of S-adenosyl-L-methionine, resulting in the formation of 4-dimethylallyl-L-abrine. The catalase easC and the FAD-dependent oxidoreductase easE then transform 4-dimethylallyl-L-abrine to chanoclavine-I which is further oxidized by easD in the presence of NAD(+), resulting in the formation of chanoclavine-I aldehyde. Agroclavine dehydrogenase easG then mediates the conversion of chanoclavine-I aldehyde to agroclavine via a non-enzymatic adduct reaction: the substrate is an iminium intermediate that is formed spontaneously from chanoclavine-I aldehyde in the presence of glutathione. The presence of easA is not required to complete this reaction. Further conversion of agroclavine to paspalic acid is a two-step process involving oxidation of agroclavine to elymoclavine and of elymoclavine to paspalic acid, the second step being performed by the elymoclavine oxidase cloA. Paspalic acid is then further converted to D-lysergic acid. Ergopeptines are assembled from D-lysergic acid and three different amino acids by the D-lysergyl-peptide-synthetases composed each of a monomudular and a trimodular nonribosomal peptide synthetase subunit. LpsB and lpsC encode the monomodular subunits responsible for D-lysergic acid activation and incorporation into the ergopeptine backbone. LpsA1 and A2 subunits encode the trimodular nonribosomal peptide synthetase assembling the tripeptide portion of ergopeptines. LpsA1 is responsible for formation of the major ergopeptine, ergotamine, and lpsA2 for alpha-ergocryptine, the minor ergopeptine of the total alkaloid mixture elaborated by C.purpurea. D-lysergyl-tripeptides are assembled by the nonribosomal peptide synthetases and released as N-(D-lysergyl-aminoacyl)-lactams. Cyclolization of the D-lysergyl-tripeptides is performed by the Fe(2+)/2-ketoglutarate-dependent dioxygenase easH which introduces a hydroxyl group into N-(D-lysergyl-aminoacyl)-lactam at alpha-C of the aminoacyl residue followed by spontaneous condensation with the terminal lactam carbonyl group. The chain is FAD-linked oxidoreductase easE from Claviceps purpurea (strain 20.1) (Ergot fungus).